Consider the following 128-residue polypeptide: Light-regulated protein, chloroplastic (128 aa).

Repeat copies occupy residues 58-72 (VFPM…GEAC) and 111-125 (VFPE…GEFC). Residues 58–125 (VFPMEACDLI…ACDDLGGEFC (68 aa)) are 2 X 15 AA approximate repeats.

As to quaternary structure, component of high molecular weight thylakoid LFNRs-containing protein complexes containing LIR1, LFNR1, LFNR2, TIC62 and TROL proteins. Interacts directly with LFNR1 and LFNR2; LIR1 increases the affinity of LFNR1 and LFNR2 for TIC62 and subsequent thylakoid relocalization. Post-translationally, may form interchain disulfide bonds with LFNR1 and LFNR2.

It is found in the plastid. It localises to the chloroplast thylakoid membrane. Its subcellular location is the chloroplast envelope. The protein localises to the chloroplast stroma. Thylakoid-determinant subunit of high molecular weight LFNRs-containing protein complexes. This chain is Light-regulated protein, chloroplastic (LIR1), found in Oryza sativa subsp. japonica (Rice).